A 94-amino-acid polypeptide reads, in one-letter code: Ubiquitin-like protein ATG12B (94 aa).

A2 is subject to N-acetylalanine. G94 is covalently cross-linked (Glycyl lysine isopeptide (Gly-Lys) (interchain with K-128 in ATG5)).

The protein belongs to the ATG12 family. Ubiquitous.

It is found in the cytoplasm. Functionally, ubiquitin-like protein involved in cytoplasm to vacuole transport (Cvt) and autophagy vesicles formation. Conjugation with ATG5 through a ubiquitin-like conjugating system involving also ATG7 as an E1-like activating enzyme and ATG10 as an E2-like conjugating enzyme, is essential for its function. ATG12/ATG5 conjugate has an essential role in plant nutrient recycling. The polypeptide is Ubiquitin-like protein ATG12B (ATG12B) (Arabidopsis thaliana (Mouse-ear cress)).